The chain runs to 388 residues: MTTTPISLTPGVLAEAVVDLGAIAHNVRLLRERAGSAQVMAVVKADGYGHGATAVARTALAAGAVELGVASVDEALTLRADGITAPVLAWLHAPGMDFGPALAADVQIAISSIRQLDEALDAARRTGTTATVTVKIDTGLNRNGVAPALYPEMVTRLRQAVAEDAIRLRGLMTHMVHADAPEKPINDIQSQRFKQMLDHARDQGVRFEVAHLSNSSATMARPDLTLDLVRPGIAVYGLSPVPRLGDMGLVPAMTVKCAVALVKSVSAGEGVSYGHTWIAPHDTNVALLPIGYADGVFRSLGGRLEVLINGKRRPGVGRVCMDQFLVDLGPGPLDVAEGDEAILFGPGTRGEPTAQDWADLVGTIHYEVVTSPRGRITRVYREAETVER.

The active-site Proton acceptor; specific for D-alanine is the Lys-44. An N6-(pyridoxal phosphate)lysine modification is found at Lys-44. Arg-142 is a substrate binding site. Tyr-273 (proton acceptor; specific for L-alanine) is an active-site residue. Substrate is bound at residue Met-321.

It belongs to the alanine racemase family. Requires pyridoxal 5'-phosphate as cofactor.

It catalyses the reaction L-alanine = D-alanine. It participates in amino-acid biosynthesis; D-alanine biosynthesis; D-alanine from L-alanine: step 1/1. Catalyzes the interconversion of L-alanine and D-alanine. May also act on other amino acids. The protein is Alanine racemase (alr) of Mycobacterium ulcerans (strain Agy99).